Reading from the N-terminus, the 567-residue chain is Urease subunit alpha (567 aa).

The Urease domain occupies 129-567 (GGVDTHIHWI…LPMAQRYFLF (439 aa)). H134, H136, and K217 together coordinate Ni(2+). K217 carries the N6-carboxylysine modification. Residue H219 coordinates substrate. H246 and H272 together coordinate Ni(2+). The active-site Proton donor is the H320. D360 contacts Ni(2+).

The protein belongs to the metallo-dependent hydrolases superfamily. Urease alpha subunit family. In terms of assembly, heterotrimer of UreA (gamma), UreB (beta) and UreC (alpha) subunits. Three heterotrimers associate to form the active enzyme. Requires Ni cation as cofactor. Carboxylation allows a single lysine to coordinate two nickel ions.

The protein localises to the cytoplasm. The enzyme catalyses urea + 2 H2O + H(+) = hydrogencarbonate + 2 NH4(+). Its pathway is nitrogen metabolism; urea degradation; CO(2) and NH(3) from urea (urease route): step 1/1. The sequence is that of Urease subunit alpha from Citrobacter koseri (strain ATCC BAA-895 / CDC 4225-83 / SGSC4696).